The following is a 432-amino-acid chain: Beta-fructosidase (432 aa).

Residues 14–17 (WMND), Gln-33, Trp-41, 74–75 (FS), Tyr-92, 137–138 (RD), 188–190 (EIE), Thr-208, and Trp-260 each bind substrate. Asp-17 is a catalytic residue.

This sequence belongs to the glycosyl hydrolase 32 family.

The enzyme catalyses Hydrolysis of terminal non-reducing beta-D-fructofuranoside residues in beta-D-fructofuranosides.. Functionally, hydrolysis of sucrose, raffinose, inulin and levan. Specific for the fructose moiety and the beta-anomeric configuration of the glycosidic linkages of its substrates. The enzyme released fructose from sucrose and raffinose, and the fructose polymer inulin is hydrolyzed quantitatively in an exo-type fashion. The protein is Beta-fructosidase (bfrA) of Thermotoga maritima (strain ATCC 43589 / DSM 3109 / JCM 10099 / NBRC 100826 / MSB8).